Here is a 640-residue protein sequence, read N- to C-terminus: 1-deoxy-D-xylulose-5-phosphate synthase (640 aa).

Thiamine diphosphate-binding positions include H75 and 117-119; that span reads GHA. D146 contacts Mg(2+). Thiamine diphosphate contacts are provided by residues 147–148, N175, and E370; that span reads AA. N175 is a binding site for Mg(2+).

Belongs to the transketolase family. DXPS subfamily. Homodimer. Mg(2+) serves as cofactor. It depends on thiamine diphosphate as a cofactor.

It carries out the reaction D-glyceraldehyde 3-phosphate + pyruvate + H(+) = 1-deoxy-D-xylulose 5-phosphate + CO2. It functions in the pathway metabolic intermediate biosynthesis; 1-deoxy-D-xylulose 5-phosphate biosynthesis; 1-deoxy-D-xylulose 5-phosphate from D-glyceraldehyde 3-phosphate and pyruvate: step 1/1. Functionally, catalyzes the acyloin condensation reaction between C atoms 2 and 3 of pyruvate and glyceraldehyde 3-phosphate to yield 1-deoxy-D-xylulose-5-phosphate (DXP). The polypeptide is 1-deoxy-D-xylulose-5-phosphate synthase (Chlamydia trachomatis serovar L2 (strain ATCC VR-902B / DSM 19102 / 434/Bu)).